The primary structure comprises 85 residues: Large ribosomal subunit protein bL27 (85 aa).

The protein belongs to the bacterial ribosomal protein bL27 family.

This Vesicomyosocius okutanii subsp. Calyptogena okutanii (strain HA) protein is Large ribosomal subunit protein bL27.